The following is a 319-amino-acid chain: NADH-quinone oxidoreductase subunit H 1 (319 aa).

The next 9 membrane-spanning stretches (helical) occupy residues 1–21, 77–97, 107–127, 147–167, 179–199, 214–234, 238–258, 262–282, and 293–313; these read MIGL…LLVV, ILAP…VAFG, VGVL…MLGA, LAYE…AGSL, VWFV…GVAA, LVAG…FLGE, VLLV…GPWL, IWFG…RATL, and FAWK…GIVV.

The protein belongs to the complex I subunit 1 family. As to quaternary structure, NDH-1 is composed of 14 different subunits. Subunits NuoA, H, J, K, L, M, N constitute the membrane sector of the complex.

It is found in the cell inner membrane. It carries out the reaction a quinone + NADH + 5 H(+)(in) = a quinol + NAD(+) + 4 H(+)(out). NDH-1 shuttles electrons from NADH, via FMN and iron-sulfur (Fe-S) centers, to quinones in the respiratory chain. The immediate electron acceptor for the enzyme in this species is believed to be ubiquinone. Couples the redox reaction to proton translocation (for every two electrons transferred, four hydrogen ions are translocated across the cytoplasmic membrane), and thus conserves the redox energy in a proton gradient. This subunit may bind ubiquinone. This chain is NADH-quinone oxidoreductase subunit H 1, found in Rhodopseudomonas palustris (strain HaA2).